The sequence spans 162 residues: Large ribosomal subunit protein bL17 (162 aa).

Positions 126 to 162 (KKEEVKTKSRRGGKAKKAEPTTEAPANTTEETTDSAE) are disordered. A compositionally biased stretch (low complexity) spans 146–155 (TTEAPANTTE).

Belongs to the bacterial ribosomal protein bL17 family. As to quaternary structure, part of the 50S ribosomal subunit. Contacts protein L32.

This is Large ribosomal subunit protein bL17 from Flavobacterium psychrophilum (strain ATCC 49511 / DSM 21280 / CIP 103535 / JIP02/86).